Consider the following 303-residue polypeptide: Probable 5-dehydro-4-deoxyglucarate dehydratase (303 aa).

Belongs to the DapA family.

The enzyme catalyses 5-dehydro-4-deoxy-D-glucarate + H(+) = 2,5-dioxopentanoate + CO2 + H2O. The protein operates within carbohydrate acid metabolism; D-glucarate degradation; 2,5-dioxopentanoate from D-glucarate: step 2/2. The chain is Probable 5-dehydro-4-deoxyglucarate dehydratase from Pseudomonas putida (strain GB-1).